The primary structure comprises 143 residues: Ribosome-binding factor A (143 aa).

Residues 119–129 show a composition bias toward basic and acidic residues; the sequence is AVGDKPAVPRD. Residues 119–143 form a disordered region; it reads AVGDKPAVPRDDNDDPVSDNPERDA.

Belongs to the RbfA family. As to quaternary structure, monomer. Binds 30S ribosomal subunits, but not 50S ribosomal subunits or 70S ribosomes.

It localises to the cytoplasm. Its function is as follows. One of several proteins that assist in the late maturation steps of the functional core of the 30S ribosomal subunit. Associates with free 30S ribosomal subunits (but not with 30S subunits that are part of 70S ribosomes or polysomes). Required for efficient processing of 16S rRNA. May interact with the 5'-terminal helix region of 16S rRNA. The chain is Ribosome-binding factor A from Marinobacter nauticus (strain ATCC 700491 / DSM 11845 / VT8) (Marinobacter aquaeolei).